A 613-amino-acid polypeptide reads, in one-letter code: Dihydroxy-acid dehydratase (613 aa).

Aspartate 81 contacts Mg(2+). Cysteine 122 lines the [2Fe-2S] cluster pocket. Residues aspartate 123 and lysine 124 each coordinate Mg(2+). An N6-carboxylysine modification is found at lysine 124. Cysteine 195 is a binding site for [2Fe-2S] cluster. Glutamate 491 contributes to the Mg(2+) binding site. The active-site Proton acceptor is serine 517.

Belongs to the IlvD/Edd family. Homodimer. [2Fe-2S] cluster is required as a cofactor. Requires Mg(2+) as cofactor.

It carries out the reaction (2R)-2,3-dihydroxy-3-methylbutanoate = 3-methyl-2-oxobutanoate + H2O. It catalyses the reaction (2R,3R)-2,3-dihydroxy-3-methylpentanoate = (S)-3-methyl-2-oxopentanoate + H2O. The protein operates within amino-acid biosynthesis; L-isoleucine biosynthesis; L-isoleucine from 2-oxobutanoate: step 3/4. It functions in the pathway amino-acid biosynthesis; L-valine biosynthesis; L-valine from pyruvate: step 3/4. Functionally, functions in the biosynthesis of branched-chain amino acids. Catalyzes the dehydration of (2R,3R)-2,3-dihydroxy-3-methylpentanoate (2,3-dihydroxy-3-methylvalerate) into 2-oxo-3-methylpentanoate (2-oxo-3-methylvalerate) and of (2R)-2,3-dihydroxy-3-methylbutanoate (2,3-dihydroxyisovalerate) into 2-oxo-3-methylbutanoate (2-oxoisovalerate), the penultimate precursor to L-isoleucine and L-valine, respectively. The sequence is that of Dihydroxy-acid dehydratase from Buchnera aphidicola subsp. Melaphis rhois.